The following is a 410-amino-acid chain: Sensor-like histidine kinase SenX3 (410 aa).

Helical transmembrane passes span 6 to 26 (ALLLAGVLSALALAVGGAVGM) and 46 to 66 (ITVSQMLQCIVTLMPLGAAVV). The Histidine kinase domain occupies 164–380 (NVSHELKTPV…TFTLALPALI (217 aa)). Phosphohistidine; by autocatalysis is present on His-167. Positions 385 to 410 (DDERPEQAREPELRSNRSQREEELSR) are disordered.

Autophosphorylated.

The protein resides in the cell membrane. The catalysed reaction is ATP + protein L-histidine = ADP + protein N-phospho-L-histidine.. Its function is as follows. Member of the two-component regulatory system SenX3/RegX3. Autophosphorylates, and then transfers the phosphate group to RegX3. The sequence is that of Sensor-like histidine kinase SenX3 from Mycobacterium bovis (strain ATCC BAA-935 / AF2122/97).